Reading from the N-terminus, the 545-residue chain is Glucose-6-phosphate isomerase (545 aa).

Glu-351 acts as the Proton donor in catalysis. Catalysis depends on residues His-382 and Lys-510.

This sequence belongs to the GPI family.

It localises to the cytoplasm. The catalysed reaction is alpha-D-glucose 6-phosphate = beta-D-fructose 6-phosphate. Its pathway is carbohydrate biosynthesis; gluconeogenesis. It functions in the pathway carbohydrate degradation; glycolysis; D-glyceraldehyde 3-phosphate and glycerone phosphate from D-glucose: step 2/4. Catalyzes the reversible isomerization of glucose-6-phosphate to fructose-6-phosphate. In Helicobacter pylori (strain J99 / ATCC 700824) (Campylobacter pylori J99), this protein is Glucose-6-phosphate isomerase.